We begin with the raw amino-acid sequence, 549 residues long: Cytoplasmic trehalase (549 aa).

Substrate contacts are provided by residues arginine 168, 175–176 (WD), asparagine 212, 221–223 (RSQ), 292–294 (RDE), and glycine 324. Residues aspartate 326 and glutamate 509 each act as proton donor/acceptor in the active site. Glutamate 525 is a binding site for substrate.

It belongs to the glycosyl hydrolase 37 family. As to quaternary structure, monomer.

It localises to the cytoplasm. The enzyme catalyses alpha,alpha-trehalose + H2O = alpha-D-glucose + beta-D-glucose. It participates in glycan degradation; trehalose degradation; D-glucose from alpha,alpha-trehalose: step 1/1. Its function is as follows. Hydrolyzes trehalose to glucose. Could be involved, in cells returning to low osmolarity conditions, in the utilization of the accumulated cytoplasmic trehalose, which was synthesized in response to high osmolarity. The sequence is that of Cytoplasmic trehalase from Shigella flexneri serotype 5b (strain 8401).